The primary structure comprises 642 residues: 1-deoxy-D-xylulose-5-phosphate synthase 2 (642 aa).

Thiamine diphosphate contacts are provided by residues histidine 73 and 113 to 115; that span reads SHA. Residue aspartate 144 participates in Mg(2+) binding. Residues 145 to 146, asparagine 174, tyrosine 285, and glutamate 366 contribute to the thiamine diphosphate site; that span reads GA. Asparagine 174 serves as a coordination point for Mg(2+).

It belongs to the transketolase family. DXPS subfamily. In terms of assembly, homodimer. Mg(2+) is required as a cofactor. The cofactor is thiamine diphosphate.

It catalyses the reaction D-glyceraldehyde 3-phosphate + pyruvate + H(+) = 1-deoxy-D-xylulose 5-phosphate + CO2. It participates in metabolic intermediate biosynthesis; 1-deoxy-D-xylulose 5-phosphate biosynthesis; 1-deoxy-D-xylulose 5-phosphate from D-glyceraldehyde 3-phosphate and pyruvate: step 1/1. In terms of biological role, catalyzes the acyloin condensation reaction between C atoms 2 and 3 of pyruvate and glyceraldehyde 3-phosphate to yield 1-deoxy-D-xylulose-5-phosphate (DXP). The protein is 1-deoxy-D-xylulose-5-phosphate synthase 2 of Streptomyces avermitilis (strain ATCC 31267 / DSM 46492 / JCM 5070 / NBRC 14893 / NCIMB 12804 / NRRL 8165 / MA-4680).